The following is a 64-amino-acid chain: Cytochrome c oxidase subunit 5C-2 (64 aa).

Residues Ser15–Trp34 form a helical membrane-spanning segment.

This sequence belongs to the cytochrome c oxidase subunit 5C family.

It localises to the mitochondrion inner membrane. Functionally, this protein is one of the nuclear-coded polypeptide chains of cytochrome c oxidase, the terminal oxidase in mitochondrial electron transport. The protein is Cytochrome c oxidase subunit 5C-2 of Arabidopsis thaliana (Mouse-ear cress).